Reading from the N-terminus, the 232-residue chain is Peptidyl-prolyl cis-trans isomerase CYP26-1 (232 aa).

A PPIase cyclophilin-type domain is found at 7 to 166; that stretch reads FFDLTVDGKP…KPVVIADCGE (160 aa). The N-linked (GlcNAc...) asparagine glycan is linked to asparagine 108. Residues 212–232 form a helical membrane-spanning segment; it reads YYLINIVVACMVLMCFWSWFV.

The protein belongs to the cyclophilin-type PPIase family. As to expression, expressed only in flowers.

Its subcellular location is the membrane. It catalyses the reaction [protein]-peptidylproline (omega=180) = [protein]-peptidylproline (omega=0). Functionally, PPIases accelerate the folding of proteins. It catalyzes the cis-trans isomerization of proline imidic peptide bonds in oligopeptides. The chain is Peptidyl-prolyl cis-trans isomerase CYP26-1 (CYP26-1) from Arabidopsis thaliana (Mouse-ear cress).